The following is a 212-amino-acid chain: Pyridoxine/pyridoxamine 5'-phosphate oxidase (212 aa).

Residues Arg8–Tyr11 and Lys66 contribute to the substrate site. FMN contacts are provided by residues Arg61 to Lys66, Phe76 to Thr77, Arg82, Lys83, and Gln105. Positions 123, 127, and 131 each coordinate substrate. FMN contacts are provided by residues Gln140–Ser141 and Trp184. Arg190–His192 is a substrate binding site. Residue Arg194 coordinates FMN.

This sequence belongs to the pyridoxamine 5'-phosphate oxidase family. As to quaternary structure, homodimer. FMN serves as cofactor.

The enzyme catalyses pyridoxamine 5'-phosphate + O2 + H2O = pyridoxal 5'-phosphate + H2O2 + NH4(+). It catalyses the reaction pyridoxine 5'-phosphate + O2 = pyridoxal 5'-phosphate + H2O2. It participates in cofactor metabolism; pyridoxal 5'-phosphate salvage; pyridoxal 5'-phosphate from pyridoxamine 5'-phosphate: step 1/1. It functions in the pathway cofactor metabolism; pyridoxal 5'-phosphate salvage; pyridoxal 5'-phosphate from pyridoxine 5'-phosphate: step 1/1. Functionally, catalyzes the oxidation of either pyridoxine 5'-phosphate (PNP) or pyridoxamine 5'-phosphate (PMP) into pyridoxal 5'-phosphate (PLP). The chain is Pyridoxine/pyridoxamine 5'-phosphate oxidase from Cupriavidus taiwanensis (strain DSM 17343 / BCRC 17206 / CCUG 44338 / CIP 107171 / LMG 19424 / R1) (Ralstonia taiwanensis (strain LMG 19424)).